A 300-amino-acid polypeptide reads, in one-letter code: Sulfate adenylyltransferase subunit 2 (300 aa).

The segment at 281-300 (RAIDRDEAGSMEKKKREGYF) is disordered.

The protein belongs to the PAPS reductase family. CysD subfamily. As to quaternary structure, heterodimer composed of CysD, the smaller subunit, and CysN.

It carries out the reaction sulfate + ATP + H(+) = adenosine 5'-phosphosulfate + diphosphate. It functions in the pathway sulfur metabolism; hydrogen sulfide biosynthesis; sulfite from sulfate: step 1/3. Functionally, with CysN forms the ATP sulfurylase (ATPS) that catalyzes the adenylation of sulfate producing adenosine 5'-phosphosulfate (APS) and diphosphate, the first enzymatic step in sulfur assimilation pathway. APS synthesis involves the formation of a high-energy phosphoric-sulfuric acid anhydride bond driven by GTP hydrolysis by CysN coupled to ATP hydrolysis by CysD. This chain is Sulfate adenylyltransferase subunit 2, found in Brucella abortus (strain 2308).